Here is a 184-residue protein sequence, read N- to C-terminus: dCTP deaminase (184 aa).

DCTP contacts are provided by residues 97–102 (RSTFAR) and Asp-113. Catalysis depends on Glu-123, which acts as the Proton donor/acceptor. DCTP-binding residues include Tyr-155 and Gln-162.

The protein belongs to the dCTP deaminase family. As to quaternary structure, homotrimer.

The catalysed reaction is dCTP + H2O + H(+) = dUTP + NH4(+). It participates in pyrimidine metabolism; dUMP biosynthesis; dUMP from dCTP (dUTP route): step 1/2. Catalyzes the deamination of dCTP to dUTP. This is dCTP deaminase from Saccharolobus solfataricus (strain ATCC 35092 / DSM 1617 / JCM 11322 / P2) (Sulfolobus solfataricus).